Here is a 390-residue protein sequence, read N- to C-terminus: Cystathionine beta-lyase (390 aa).

At K202 the chain carries N6-(pyridoxal phosphate)lysine.

This sequence belongs to the trans-sulfuration enzymes family. The cofactor is pyridoxal 5'-phosphate.

The protein localises to the cytoplasm. It localises to the nucleus. The enzyme catalyses L,L-cystathionine + H2O = L-homocysteine + pyruvate + NH4(+). It catalyses the reaction an S-substituted L-cysteine + H2O = a thiol + pyruvate + NH4(+). The protein operates within amino-acid biosynthesis; L-methionine biosynthesis via de novo pathway; L-homocysteine from L-cystathionine: step 1/1. The protein is Cystathionine beta-lyase (str3) of Schizosaccharomyces pombe (strain 972 / ATCC 24843) (Fission yeast).